Reading from the N-terminus, the 60-residue chain is UPF0434 protein Rfer_3156 (60 aa).

The protein belongs to the UPF0434 family.

The chain is UPF0434 protein Rfer_3156 from Albidiferax ferrireducens (strain ATCC BAA-621 / DSM 15236 / T118) (Rhodoferax ferrireducens).